The primary structure comprises 280 residues: MNGWAGVCLITHCLNTRSRTYVALNMLAFARTPRGVPSCLFNKVWVSRYALVLILMVCASESSTSWAVTSNGLPNCSTVTRTAGQDAELHGPAPLSCNVTQWGRYENGSTPVLWCTLRGSRMRVSLGHRVAFGCSWKTFFIYNVSESSGGTYYQKGYNCTDKHITLSCFNLTVVPRAVQSTTTVMTPTLVTNSTFSVSLVALRLTTNSSAFGHAIYQRQQRVENGTLSKNITNLAFTYGSWGVAMLLFAAVMVLVDLGLPQSAWRRWRSHVDDEERGLLM.

Asn-75, Asn-98, Asn-107, Asn-143, Asn-158, Asn-170, Asn-192, Asn-207, Asn-224, and Asn-230 each carry an N-linked (GlcNAc...) asparagine; by host glycan. Residues 235–255 traverse the membrane as a helical segment; it reads AFTYGSWGVAMLLFAAVMVLV.

Belongs to the RL11 family.

Its subcellular location is the host membrane. This is an uncharacterized protein from Human cytomegalovirus (strain Merlin) (HHV-5).